The primary structure comprises 371 residues: Protein MxiG (371 aa).

A helical transmembrane segment spans residues 127–141 (VFFFFAVIVVLIIIF).

It localises to the cell inner membrane. The protein localises to the cell outer membrane. In terms of biological role, involved in the secretion of the Ipa antigens. Involved in the intracellular dissemination of Shigella. Part of the Mxi-Spa secretion apparatus. The chain is Protein MxiG (mxiG) from Shigella flexneri.